The primary structure comprises 247 residues: 2,3-bisphosphoglycerate-dependent phosphoglycerate mutase (247 aa).

Residues Arg-8–Asn-15, Thr-21–Gly-22, Arg-60, Glu-87–Tyr-90, Lys-98, Arg-114–Arg-115, and Gly-183–Asn-184 each bind substrate. The active-site Tele-phosphohistidine intermediate is His-9. Glu-87 acts as the Proton donor/acceptor in catalysis.

The protein belongs to the phosphoglycerate mutase family. BPG-dependent PGAM subfamily. In terms of assembly, homodimer.

The catalysed reaction is (2R)-2-phosphoglycerate = (2R)-3-phosphoglycerate. The protein operates within carbohydrate degradation; glycolysis; pyruvate from D-glyceraldehyde 3-phosphate: step 3/5. In terms of biological role, catalyzes the interconversion of 2-phosphoglycerate and 3-phosphoglycerate. The protein is 2,3-bisphosphoglycerate-dependent phosphoglycerate mutase of Acidovorax ebreus (strain TPSY) (Diaphorobacter sp. (strain TPSY)).